The following is a 291-amino-acid chain: Phosphatidylglycerol--prolipoprotein diacylglyceryl transferase (291 aa).

A run of 7 helical transmembrane segments spans residues 21–41 (VALH…MWLA), 60–80 (LLYA…VLFY), 96–116 (WDGG…MIIF), 130–150 (FIAP…FING), 198–218 (SQLY…NLFI), 225–245 (GAVS…VEFF), and 260–280 (ISMG…MMVW). Residue Arg143 coordinates a 1,2-diacyl-sn-glycero-3-phospho-(1'-sn-glycerol).

The protein belongs to the Lgt family.

It localises to the cell inner membrane. The catalysed reaction is L-cysteinyl-[prolipoprotein] + a 1,2-diacyl-sn-glycero-3-phospho-(1'-sn-glycerol) = an S-1,2-diacyl-sn-glyceryl-L-cysteinyl-[prolipoprotein] + sn-glycerol 1-phosphate + H(+). It functions in the pathway protein modification; lipoprotein biosynthesis (diacylglyceryl transfer). In terms of biological role, catalyzes the transfer of the diacylglyceryl group from phosphatidylglycerol to the sulfhydryl group of the N-terminal cysteine of a prolipoprotein, the first step in the formation of mature lipoproteins. The polypeptide is Phosphatidylglycerol--prolipoprotein diacylglyceryl transferase (Salmonella agona (strain SL483)).